A 751-amino-acid polypeptide reads, in one-letter code: MAISSKEQETKKVKISVDKNPVDTSFEKWAQPGHFSRTLAKGPRTTTWIWNLHADAHDFDSQTSSLEEVSRKIFSAHFGQLSVIFLWLSGMYFHGARFSNYVAWLSNPTGIKPSAQVVWPIVGQEILNGDVGGGFQGVQVTSGWFQLWRASGITTEFQLYCTAIGGLAMAALMLFAGWFHYHKAAPKLEWFQNVESMMNHHLAGLLGLGCLGWTGHQIHLSLPINKLLDSGVSPQEIPLPHEFLINRELMAQLYPSFSKGLVPFFTLNWAEYSDFLTFKGGLNPVTGGLWLSDTAHHHLALAVLFLAAGHMYRTNWGIGHSMKEILEAHKGPFTGNGHEGLYEILTTSWHAQLAINLAMMGSLSIIVAHHMYAMPPYPYIATDYPTQLSLFTHHMWIGGFCIVGAGAHASIFMVRDYNPAENYNNLRSSSRHRDAIVSHLNWVCIFLGFHSFGLYIHNDTMRALGRSQDMFSDTAIQLQPIFAQWVQSIHTLAPGNTAPNALATASYAFGGDIVSVGNKVAMMPISLGTADFLVHHIHAFTIHVTVLILVKGFLFSRNSRLIPDKANLGFRFPCDGPGRGGTCQVSGWDHVFLGLFWMYNSLSVAIFHFSWKMQSDVWGSVSPSGNVSHITGGNFAQSAITINGWLRDFLWAQASQVIQSYGSALSAYGLIFLAAHFVWAFSLMFLFSGRGYWQELIESIVWAHNKIKVAPAIQPRALSITQGRAVGVAHYLLGGIGTTWAFFLARIISVG.

A run of 8 helical transmembrane segments spans residues isoleucine 73–alanine 96, leucine 159–histidine 182, methionine 198–leucine 222, threonine 294–tyrosine 312, tryptophan 349–tyrosine 372, leucine 388–valine 414, alanine 435–histidine 457, and phenylalanine 532–valine 550. The [4Fe-4S] cluster site is built by cysteine 574 and cysteine 583. A run of 2 helical transmembrane segments spans residues histidine 590–tryptophan 611 and leucine 665–phenylalanine 687. Histidine 676 serves as a coordination point for chlorophyll a'. Chlorophyll a is bound by residues methionine 684 and tyrosine 692. Tryptophan 693 contacts phylloquinone. Residues alanine 725 to alanine 745 form a helical membrane-spanning segment.

The protein belongs to the PsaA/PsaB family. In terms of assembly, the PsaA/B heterodimer binds the P700 chlorophyll special pair and subsequent electron acceptors. PSI consists of a core antenna complex that captures photons, and an electron transfer chain that converts photonic excitation into a charge separation. The eukaryotic PSI reaction center is composed of at least 11 subunits. The cofactor is P700 is a chlorophyll a/chlorophyll a' dimer, A0 is one or more chlorophyll a, A1 is one or both phylloquinones and FX is a shared 4Fe-4S iron-sulfur center..

The protein localises to the plastid. It localises to the chloroplast thylakoid membrane. The catalysed reaction is reduced [plastocyanin] + hnu + oxidized [2Fe-2S]-[ferredoxin] = oxidized [plastocyanin] + reduced [2Fe-2S]-[ferredoxin]. PsaA and PsaB bind P700, the primary electron donor of photosystem I (PSI), as well as the electron acceptors A0, A1 and FX. PSI is a plastocyanin/cytochrome c6-ferredoxin oxidoreductase, converting photonic excitation into a charge separation, which transfers an electron from the donor P700 chlorophyll pair to the spectroscopically characterized acceptors A0, A1, FX, FA and FB in turn. Oxidized P700 is reduced on the lumenal side of the thylakoid membrane by plastocyanin or cytochrome c6. This Pyropia yezoensis (Susabi-nori) protein is Photosystem I P700 chlorophyll a apoprotein A1.